Reading from the N-terminus, the 311-residue chain is Pyrimidine-specific ribonucleoside hydrolase RihA (311 aa).

Histidine 240 is a catalytic residue.

The protein belongs to the IUNH family. RihA subfamily.

Hydrolyzes cytidine or uridine to ribose and cytosine or uracil, respectively. This Salmonella newport (strain SL254) protein is Pyrimidine-specific ribonucleoside hydrolase RihA.